The primary structure comprises 211 residues: FMN-dependent NADH:quinone oxidoreductase (211 aa).

Residue 17 to 19 (SYS) participates in FMN binding.

This sequence belongs to the azoreductase type 1 family. Homodimer. FMN is required as a cofactor.

It carries out the reaction 2 a quinone + NADH + H(+) = 2 a 1,4-benzosemiquinone + NAD(+). It catalyses the reaction N,N-dimethyl-1,4-phenylenediamine + anthranilate + 2 NAD(+) = 2-(4-dimethylaminophenyl)diazenylbenzoate + 2 NADH + 2 H(+). Its function is as follows. Quinone reductase that provides resistance to thiol-specific stress caused by electrophilic quinones. Functionally, also exhibits azoreductase activity. Catalyzes the reductive cleavage of the azo bond in aromatic azo compounds to the corresponding amines. This is FMN-dependent NADH:quinone oxidoreductase from Bacillus velezensis (strain DSM 23117 / BGSC 10A6 / LMG 26770 / FZB42) (Bacillus amyloliquefaciens subsp. plantarum).